The sequence spans 212 residues: Pyrrolidone-carboxylate peptidase (212 aa).

Active-site residues include glutamate 78, cysteine 141, and histidine 165.

Belongs to the peptidase C15 family. Homotetramer.

The protein resides in the cytoplasm. The enzyme catalyses Release of an N-terminal pyroglutamyl group from a polypeptide, the second amino acid generally not being Pro.. Removes 5-oxoproline from various penultimate amino acid residues except L-proline. This Staphylococcus aureus (strain bovine RF122 / ET3-1) protein is Pyrrolidone-carboxylate peptidase.